A 378-amino-acid chain; its full sequence is Cyclic di-GMP phosphodiesterase response regulator RpfG (378 aa).

Residues 29–147 (NIVIVDDQMS…ELRARCSNLL (119 aa)) enclose the Response regulatory domain. Aspartate 80 carries the post-translational modification 4-aspartylphosphate. An HD-GYP domain is found at 174-371 (VEERERETLS…LEQICGQFST (198 aa)).

In terms of assembly, interacts with a subset of GGDEF domain-containing proteins. Phosphorylated and activated by RpfC.

Its subcellular location is the cytoplasm. It carries out the reaction 3',3'-c-di-GMP + 2 H2O = 2 GMP + 2 H(+). Member of the two-component regulatory system RpfG/RpfC, which is involved in the perception and response to the diffusible signaling factor (DSF), which is essential for cell-cell signaling. Detection of DSF leads to the positive regulation of biofilm dispersal and the production of virulence factors. Activated RpfG degrades cyclic di-GMP to GMP, leading to the activation of Clp, a global transcriptional regulator that regulates a large set of genes in DSF pathway. May also directly control genes involved in biofilm dispersal. This is Cyclic di-GMP phosphodiesterase response regulator RpfG (rpfG) from Xanthomonas campestris pv. campestris (strain 8004).